The primary structure comprises 88 residues: MLATDKKQEIISTYKLHDSDTGSPEVQIAILTERITYLTEHFKTHKKDHHSRRGLLKIVGQRRGLLDYLKKKDVERYRSIIEKLGIRR.

Belongs to the universal ribosomal protein uS15 family. In terms of assembly, part of the 30S ribosomal subunit. Forms a bridge to the 50S subunit in the 70S ribosome, contacting the 23S rRNA.

One of the primary rRNA binding proteins, it binds directly to 16S rRNA where it helps nucleate assembly of the platform of the 30S subunit by binding and bridging several RNA helices of the 16S rRNA. Functionally, forms an intersubunit bridge (bridge B4) with the 23S rRNA of the 50S subunit in the ribosome. The protein is Small ribosomal subunit protein uS15 of Geotalea uraniireducens (strain Rf4) (Geobacter uraniireducens).